Reading from the N-terminus, the 951-residue chain is UvrABC system protein A (951 aa).

An ATP-binding site is contributed by 33–40 (GLSGSGKS). The C4-type zinc-finger motif lies at 252-279 (CPICGFTVGELEPRLFSFNAPQGACPDC). ABC transporter domains are found at residues 309-587 (WNPI…RKSL) and 607-935 (GNGK…QYLK). 639–646 (GVSGSGKS) is an ATP binding site. The C4-type zinc-finger motif lies at 738 to 764 (CEACHGDGILKIEMNFLPDVFVPCEVC).

It belongs to the ABC transporter superfamily. UvrA family. In terms of assembly, forms a heterotetramer with UvrB during the search for lesions.

Its subcellular location is the cytoplasm. The UvrABC repair system catalyzes the recognition and processing of DNA lesions. UvrA is an ATPase and a DNA-binding protein. A damage recognition complex composed of 2 UvrA and 2 UvrB subunits scans DNA for abnormalities. When the presence of a lesion has been verified by UvrB, the UvrA molecules dissociate. This Lactiplantibacillus plantarum (strain ATCC BAA-793 / NCIMB 8826 / WCFS1) (Lactobacillus plantarum) protein is UvrABC system protein A.